The chain runs to 444 residues: N-succinylarginine dihydrolase (444 aa).

Residues 19-28 (SGLSVGNIAS), N110, and 137-138 (HR) each bind substrate. Residue E174 is part of the active site. R214 provides a ligand contact to substrate. Residue H250 is part of the active site. D252 and N362 together coordinate substrate. The active-site Nucleophile is C368.

This sequence belongs to the succinylarginine dihydrolase family. In terms of assembly, homodimer.

It carries out the reaction N(2)-succinyl-L-arginine + 2 H2O + 2 H(+) = N(2)-succinyl-L-ornithine + 2 NH4(+) + CO2. The protein operates within amino-acid degradation; L-arginine degradation via AST pathway; L-glutamate and succinate from L-arginine: step 2/5. Its function is as follows. Catalyzes the hydrolysis of N(2)-succinylarginine into N(2)-succinylornithine, ammonia and CO(2). The polypeptide is N-succinylarginine dihydrolase (Aliivibrio fischeri (strain MJ11) (Vibrio fischeri)).